The sequence spans 451 residues: MSAKLSESDLNDFIGAQVACVKPTRTLHTADEGDEALEVGKEPQEATKVSISLQDCLACAGCITSSEEILLSRQSHGVFLEAWRSLAPKALAVSVAPQSRLSLAQHFGLSVAELDQCLSGVLGSYFGAKYVVGTQLGRELSVQQTNARLVERKQQGVQGPLLCSVCPGFVLYAEKTKPGLVPYMLDVKSPQQITGALLHAADPNIYHLSLMPCFDKKLEAAREDCAREVDCVLTPREFVALLDELQLDLHSFAGAAVPIAQLTPPGWDPRVSWCSSAGSSSGGYAYQYILHMQRLHPGSTIATQAGRNADLLEHRLLAPSGVLLASAGELYGFRNIQNLVRKLLSPATKRSAKVVRRRLPQASPAPPATDPCNADFIEVMACPSGCINGGGLLNGGLGPSQRRDLVSQLNEGYARLPTLDIPMPTYSQPSYIYNLRPLAPTDDVLTVANAW.

Residues Cys20, Cys56, Cys59, Cys62, Cys166, Cys213, Cys382, and Cys386 each contribute to the [4Fe-4S] cluster site.

It belongs to the NARF family.

Its function is as follows. Component of the cytosolic Fe/S protein assembly machinery. Required for maturation of extramitochondrial Fe/S proteins. May play a role in the transfer of pre-assembled Fe/S clusters to target apoproteins. This Eremothecium gossypii (strain ATCC 10895 / CBS 109.51 / FGSC 9923 / NRRL Y-1056) (Yeast) protein is Cytosolic Fe-S cluster assembly factor NAR1 (NAR1).